The following is a 502-amino-acid chain: Lysine--tRNA ligase (502 aa).

2 residues coordinate Mg(2+): E411 and E418.

Belongs to the class-II aminoacyl-tRNA synthetase family. As to quaternary structure, homodimer. Mg(2+) is required as a cofactor.

The protein resides in the cytoplasm. The catalysed reaction is tRNA(Lys) + L-lysine + ATP = L-lysyl-tRNA(Lys) + AMP + diphosphate. In Clostridium tetani (strain Massachusetts / E88), this protein is Lysine--tRNA ligase.